The chain runs to 475 residues: Exodeoxyribonuclease I (475 aa).

Positions 13–192 constitute an Exonuclease domain; sequence FHDYETFGTH…AMADVYATIA (180 aa). Mg(2+)-binding residues include Asp15 and Glu17. The substrate site is built by Glu17 and Arg165. Asp186 lines the Mg(2+) pocket. An ExoI SH3-like domain is found at 202 to 355; the sequence is PRLFDYLFTH…KVVAIFAEAE (154 aa). Residues 358–475 form the ExoI C-terminal domain; sequence TPSDNVDAQL…ALWQYAEEIV (118 aa).

Monomer. Interacts with ssb (via C-terminus); this interaction stimulates the exonuclease activity by recruiting the enzyme to its substrate. Mg(2+) is required as a cofactor.

The catalysed reaction is Exonucleolytic cleavage in the 3'- to 5'-direction to yield nucleoside 5'-phosphates.. Its activity is regulated as follows. Inhibited by 10 mM EDTA. Degrades single-stranded DNA (ssDNA) in a highly processive manner. Also functions as a DNA deoxyribophosphodiesterase that releases deoxyribose-phosphate moieties following the cleavage of DNA at an apurinic/apyrimidinic (AP) site by either an AP endonuclease or AP lyase. The polypeptide is Exodeoxyribonuclease I (sbcB) (Escherichia coli (strain K12)).